The chain runs to 186 residues: Glutathione-independent glyoxalase DJR-1.2 (186 aa).

Catalysis depends on residues E20, C105, and H124.

It belongs to the peptidase C56 family. DJ-1 subfamily. Expressed in various tissues, including pharyngeal muscles, pharynx-intestinal valve, ventral nerve cord, spermatheca, rectal gland, inner labial (IL) cells of head neurons, phasmid (PHA/PHB) neurons in tail and supporting sheath/socket cells, as well as in head mesodermal cells (HMC), excretory canals and coelomocytes.

It localises to the cytoplasm. It catalyses the reaction methylglyoxal + H2O = (R)-lactate + H(+). Its function is as follows. Catalyzes the conversion of methylglyoxal (MG) or glyoxal (GO) to D-lactate or glycolic acid respectively in a single glutathione (GSH)-independent step. May play a role in detoxifying endogenously produced glyoxals. Involved in protection against glyoxal-induced cell death. Protects dopaminergic neurons from glyoxal-dependent neuronal degeneration. The sequence is that of Glutathione-independent glyoxalase DJR-1.2 from Caenorhabditis elegans.